The chain runs to 499 residues: Probable UTP--glucose-1-phosphate uridylyltransferase (499 aa).

UTP is bound by residues 108–111 (LNGG), Lys122, Gln185, and Gly214. 110 to 111 (GG) contacts substrate. Substrate is bound by residues His215 and 243 to 245 (NID). UTP is bound by residues Asp245 and Lys387.

Belongs to the UDPGP type 1 family.

The protein resides in the cytoplasm. It localises to the nucleus. The enzyme catalyses alpha-D-glucose 1-phosphate + UTP + H(+) = UDP-alpha-D-glucose + diphosphate. In terms of biological role, plays a central role as a glucosyl donor in cellular metabolic pathways. This Schizosaccharomyces pombe (strain 972 / ATCC 24843) (Fission yeast) protein is Probable UTP--glucose-1-phosphate uridylyltransferase.